An 87-amino-acid polypeptide reads, in one-letter code: Small ribosomal subunit protein uS15c (87 aa).

The protein belongs to the universal ribosomal protein uS15 family. As to quaternary structure, part of the 30S ribosomal subunit.

It localises to the plastid. The protein localises to the chloroplast. This chain is Small ribosomal subunit protein uS15c (rps15), found in Oenothera argillicola (Appalachian evening primrose).